Reading from the N-terminus, the 135-residue chain is Class I hydrophobin dewA (135 aa).

Positions 1–18 are cleaved as a signal peptide; the sequence is MRFIVSLLAFTAAATATA. Cystine bridges form between Cys-44/Cys-114, Cys-51/Cys-108, Cys-52/Cys-84, and Cys-115/Cys-122. The N-linked (GlcNAc...) asparagine glycan is linked to Asn-60.

This sequence belongs to the fungal hydrophobin family. In terms of assembly, forms homodimers at high concentrations, and these dimers are off-pathway to rodlet formation. Dissociation of the dimers into monomers, with resultant exposure of the hydrophobic face, is necessary for self-assembly to form functional amyloid fibrils called rodlets. Self-assembly into fibrillar rodlets occurs spontaneously at hydrophobic:hydrophilic interfaces and the rodlets further associate laterally to form amphipathic monolayers.

Its subcellular location is the secreted. The protein resides in the spore wall. In terms of biological role, aerial growth, conidiation, and dispersal of filamentous fungi in the environment rely upon a capability of their secreting small amphipathic proteins called hydrophobins (HPBs) with low sequence identity. Class I can self-assemble into an outermost layer of rodlet bundles on aerial cell surfaces, conferring cellular hydrophobicity that supports fungal growth, development and dispersal; whereas Class II form highly ordered films at water-air interfaces through intermolecular interactions but contribute nothing to the rodlet structure. DewA is a class I hydrophobin that contributes to spore wall hydrophobicity. The sequence is that of Class I hydrophobin dewA from Emericella nidulans (strain FGSC A4 / ATCC 38163 / CBS 112.46 / NRRL 194 / M139) (Aspergillus nidulans).